The sequence spans 69 residues: MKYTVIITKDEDGYYVVNVPALPGCFTQGKTKKEALINIKEAIRAYIESLKKHNEKIPRDNAEEITVHA.

It belongs to the UPF0150 family.

The protein is UPF0150 protein Ta0767 of Thermoplasma acidophilum (strain ATCC 25905 / DSM 1728 / JCM 9062 / NBRC 15155 / AMRC-C165).